We begin with the raw amino-acid sequence, 59 residues long: MSPLRYQKWLRLNEVRRQMLNEHYDVTTAAYAVGYESYPISVGNIRGCLESHPREILPG.

Positions 1–59 (MSPLRYQKWLRLNEVRRQMLNEHYDVTTAAYAVGYESYPISVGNIRGCLESHPREILPG) constitute an HTH araC/xylS-type domain. A DNA-binding region (H-T-H motif) is located at residues 26–49 (VTTAAYAVGYESYPISVGNIRGCL).

This is Putative HTH-type transcriptional regulator YneL (yneL) from Escherichia coli (strain K12).